We begin with the raw amino-acid sequence, 1054 residues long: NACHT, LRR and PYD domains-containing protein 12 (1054 aa).

The 95-residue stretch at 1–95 (MLPSTARDGL…WERGQGEDLV (95 aa)) folds into the Pyrin domain. An FISNA domain is found at 129–201 (YKDYVRRKFQ…SPIQMETLFE (73 aa)). An NACHT domain is found at 211–528 (HTVVLQGAAG…EFFAAMYCAL (318 aa)). Position 217 to 224 (217 to 224 (GAAGMGKS)) interacts with ATP. LRR repeat units follow at residues 821 to 841 (YLVE…KLLC), 850 to 871 (RLRT…DLAS), 878 to 899 (SLLE…LLCE), 907 to 928 (KLQT…GIAS), 935 to 955 (CLQE…QLLG), 964 to 985 (RLQK…DLSS), 992 to 1013 (TLHE…LLCK), and 1021 to 1042 (KLRV…RMAA).

It belongs to the NLRP family. In terms of assembly, interacts (via pyrin domain) with ASC. Interacts (via pyrin domain) with FAF1 (via UBA domain). Interacts with MAP3K14; this interaction promotes proteasomal degradation of MAP3K14. Interacts with NOD2; this interaction promotes degradation of NOD2 through the ubiquitin-proteasome pathway. Interacts with HSPA1A and HSPA8. Interacts with HSP90AA1. Interacts with TRIM25; this interaction inhibits RIGI-mediated signaling pathway. In terms of tissue distribution, mainly expressed in dendritic cells (DCs) and neutrophils.

The protein localises to the cytoplasm. Functionally, plays an essential role as an potent mitigator of inflammation. Primarily expressed in dendritic cells and macrophages, inhibits both canonical and non-canonical NF-kappa-B and ERK activation pathways. Functions as a negative regulator of NOD2 by targeting it to degradation via the proteasome pathway. In turn, promotes bacterial tolerance. Also inhibits the RIGI-mediated immune signaling against RNA viruses by reducing the E3 ubiquitin ligase TRIM25-mediated 'Lys-63'-linked RIGI activation but enhancing the E3 ubiquitin ligase RNF125-mediated 'Lys-48'-linked RIGI degradation. Also acts as a negative regulator of inflammatory response to mitigate obesity and obesity-associated diseases in adipose tissue. The chain is NACHT, LRR and PYD domains-containing protein 12 (Nlrp12) from Mus musculus (Mouse).